The sequence spans 215 residues: Interleukin-12 subunit alpha (215 aa).

Positions 1 to 22 are cleaved as a signal peptide; sequence MCQSRYLLFLATLALLNHLSLA. Intrachain disulfides connect Cys-33/Cys-106, Cys-60/Cys-192, and Cys-81/Cys-119. Residue Asn-89 is glycosylated (N-linked (GlcNAc...) asparagine).

This sequence belongs to the IL-6 superfamily. Heterodimer with IL12B; disulfide-linked. This heterodimer is known as interleukin IL-12. Heterodimer with EBI3/IL27B; not disulfide-linked. This heterodimer is known as interleukin IL-35. Interacts with NBR1; this interaction promotes IL-12 secretion.

Its subcellular location is the secreted. Its function is as follows. Heterodimerizes with IL12B to form the IL-12 cytokine or with EBI3/IL27B to form the IL-35 cytokine. IL-12 is primarily produced by professional antigen-presenting cells (APCs) such as B-cells and dendritic cells (DCs) as well as macrophages and granulocytes and regulates T-cell and natural killer-cell responses, induces the production of interferon-gamma (IFN-gamma), favors the differentiation of T-helper 1 (Th1) cells and is an important link between innate resistance and adaptive immunity. Mechanistically, exerts its biological effects through a receptor composed of IL12R1 and IL12R2 subunits. Binding to the receptor results in the rapid tyrosine phosphorylation of a number of cellular substrates including the JAK family kinases TYK2 and JAK2. In turn, recruited STAT4 gets phosphorylated and translocates to the nucleus where it regulates cytokine/growth factor responsive genes. As part of IL-35, plays essential roles in maintaining the immune homeostasis of the liver microenvironment and also functions as an immune-suppressive cytokine. Mediates biological events through unconventional receptors composed of IL12RB2 and gp130/IL6ST heterodimers or homodimers. Signaling requires the transcription factors STAT1 and STAT4, which form a unique heterodimer that binds to distinct DNA sites. The protein is Interleukin-12 subunit alpha (Il12a) of Mus musculus (Mouse).